The sequence spans 464 residues: UDP-N-acetylmuramoylalanine--D-glutamate ligase (464 aa).

An ATP-binding site is contributed by 112–118; it reads GTDGKTT.

It belongs to the MurCDEF family.

The protein resides in the cytoplasm. The enzyme catalyses UDP-N-acetyl-alpha-D-muramoyl-L-alanine + D-glutamate + ATP = UDP-N-acetyl-alpha-D-muramoyl-L-alanyl-D-glutamate + ADP + phosphate + H(+). Its pathway is cell wall biogenesis; peptidoglycan biosynthesis. In terms of biological role, cell wall formation. Catalyzes the addition of glutamate to the nucleotide precursor UDP-N-acetylmuramoyl-L-alanine (UMA). The polypeptide is UDP-N-acetylmuramoylalanine--D-glutamate ligase (Pelodictyon phaeoclathratiforme (strain DSM 5477 / BU-1)).